A 258-amino-acid polypeptide reads, in one-letter code: Tropinone reductase-like 3 (258 aa).

Position 19 to 43 (19 to 43 (IVTASTQGIGFAIAYRLGLEGAAVV)) interacts with NAD(+). Serine 150 contributes to the substrate binding site. Catalysis depends on tyrosine 163, which acts as the Proton acceptor.

Belongs to the short-chain dehydrogenases/reductases (SDR) family.

Its function is as follows. Has no tropinone reductase activity. This is Tropinone reductase-like 3 from Erythroxylum coca (Coca plant).